Here is a 213-residue protein sequence, read N- to C-terminus: MEVLRRSSVFAAEIMDAFDRSPTDKELVAQAKALGREYVHARLLRAGLSWSAPERASPAPGGRLAEVCTVLLRLGDELEQIRPSVYRNVARQLHIPLQSEPVVTDAFLAVAGHIFSAGITWGKVVSLYSVAAGLAVDCVRQAQPAMVHALVDCLGEFVRKTLATWLRRRGGWTDVLKCVVSTDPGFRSHWLVATLCSFGRFLKAAFFLLLPER.

Phosphoserine is present on Ser-7. Residues 15–45 (MDAFDRSPTDKELVAQAKALGREYVHARLLR) form an interactions with ITPR1 region. Glycyl lysine isopeptide (Lys-Gly) (interchain with G-Cter in ubiquitin) cross-links involve residues Lys-25 and Lys-32. Residues 32–44 (KALGREYVHARLL) carry the BH4 motif. Residues 67 to 83 (VCTVLLRLGDELEQIRP) carry the BH3 motif. A nuclear export signal region spans residues 71 to 79 (LLRLGDELE). The BH1 signature appears at 113–132 (HIFSAGITWGKVVSLYSVAA). Residues Lys-160 and Lys-177 each participate in a glycyl lysine isopeptide (Lys-Gly) (interchain with G-Cter in ubiquitin) cross-link. The BH2 signature appears at 165–179 (WLRRRGGWTDVLKCV). A helical transmembrane segment spans residues 190–210 (WLVATLCSFGRFLKAAFFLLL).

The protein belongs to the Bcl-2 family. Monomer; positively regulates apoptotic process. Homodimer. Heterodimer. Oligomer; promoted by apoptotic stimuli and BH3-only proteins; mediates constitutive activation. Interacts (via BH4 domain) with ITPR1; enhances BOK expression and stabilization; limits apoptosis and prevents ubiquitination and then degradation; protects ITPR1 from proteolysis by CASP3 during apoptosis. Interacts with ITPR2 and ITPR3; binds most strongly to ITPR2, and barely to ITPR3; regulates their expression. Interacts with XPO1; translocates to the cytoplasm. Interacts with BNIP3; promotes oligomerization. In terms of processing, ubiquitinated by AMFR/gp78 E3 ubiquitin ligase complex; mediates degradation by ubiquitin-proteasome pathway in a VCP/p97-dependent manner; prevents from proapoptotic activity; promotes degradation of newly synthesized proteins that are not ITPR1 associated. Widely expressed. Highly expressed in brain, kidney, and spleen.

It localises to the mitochondrion membrane. Its subcellular location is the endoplasmic reticulum membrane. It is found in the mitochondrion inner membrane. The protein resides in the cytoplasm. The protein localises to the nucleus. It localises to the mitochondrion. Its subcellular location is the endoplasmic reticulum. It is found in the mitochondrion outer membrane. The protein resides in the early endosome membrane. The protein localises to the recycling endosome membrane. It localises to the nucleus outer membrane. Its subcellular location is the golgi apparatus. It is found in the cis-Golgi network membrane. The protein resides in the trans-Golgi network membrane. The protein localises to the membrane. Apoptosis regulator that functions through different apoptotic signaling pathways. Plays a roles as pro-apoptotic protein that positively regulates intrinsic apoptotic process in a BAX- and BAK1-dependent manner or in a BAX- and BAK1-independent manner. In response to endoplasmic reticulum stress promotes mitochondrial apoptosis through downstream BAX/BAK1 activation and positive regulation of PERK-mediated unfolded protein response. Activates apoptosis independently of heterodimerization with survival-promoting BCL2 and BCL2L1 through induction of mitochondrial outer membrane permeabilization, in a BAX- and BAK1-independent manner, in response to inhibition of ERAD-proteasome degradation system, resulting in cytochrome c release. In response to DNA damage, mediates intrinsic apoptotic process in a TP53-dependent manner. Plays a role in granulosa cell apoptosis by CASP3 activation. Plays a roles as anti-apoptotic protein during neuronal apoptotic process, by negatively regulating poly ADP-ribose polymerase-dependent cell death through regulation of neuronal calcium homeostasis and mitochondrial bioenergetics in response to NMDA excitation. In addition to its role in apoptosis, may regulate trophoblast cell proliferation during the early stages of placental development, by acting on G1/S transition through regulation of CCNE1 expression. May also play a role as an inducer of autophagy by disrupting interaction between MCL1 and BECN1. This chain is Bcl-2-related ovarian killer protein, found in Mus musculus (Mouse).